The chain runs to 437 residues: Protein arginine methyltransferase NDUFAF7, mitochondrial (437 aa).

The transit peptide at 1–42 directs the protein to the mitochondrion; that stretch reads MSGLARLQRLQKFGFLMVSASANRPIQRYQCSRTEKPQKRTS.

Belongs to the NDUFAF7 family.

It localises to the mitochondrion. The enzyme catalyses L-arginyl-[protein] + 2 S-adenosyl-L-methionine = N(omega),N(omega)'-dimethyl-L-arginyl-[protein] + 2 S-adenosyl-L-homocysteine + 2 H(+). In terms of biological role, arginine methyltransferase involved in the assembly or stability of mitochondrial NADH:ubiquinone oxidoreductase complex (complex I). Acts by mediating symmetric dimethylation of 'Arg-118' of ndufs2 after it assembles into the complex I, stabilizing the early intermediate complex. The sequence is that of Protein arginine methyltransferase NDUFAF7, mitochondrial from Xenopus laevis (African clawed frog).